The following is a 250-amino-acid chain: Non-specific acid phosphatase (250 aa).

A signal peptide spans 1 to 20 (MKSRYLVFFLPLIVAKYTSA).

The protein belongs to the class A bacterial acid phosphatase family. Homodimer.

The protein localises to the periplasm. It catalyses the reaction a phosphate monoester + H2O = an alcohol + phosphate. This is Non-specific acid phosphatase (phoN) from Salmonella typhimurium (strain LT2 / SGSC1412 / ATCC 700720).